The chain runs to 290 residues: Nucleotide-binding protein BAV3158 (290 aa).

9-16 is a binding site for ATP; sequence GISGSGKS. 58-61 provides a ligand contact to GTP; sequence DVRS.

It belongs to the RapZ-like family.

Displays ATPase and GTPase activities. This Bordetella avium (strain 197N) protein is Nucleotide-binding protein BAV3158.